Reading from the N-terminus, the 42-residue chain is uncharacterized protein (42 aa).

A helical transmembrane segment spans residues 15 to 37 (PLILAVDCAIIIPNTNFIHSFLI).

It localises to the membrane. This is an uncharacterized protein from Dictyostelium discoideum (Social amoeba).